We begin with the raw amino-acid sequence, 345 residues long: S-adenosylmethionine:tRNA ribosyltransferase-isomerase (345 aa).

The protein belongs to the QueA family. In terms of assembly, monomer.

Its subcellular location is the cytoplasm. It carries out the reaction 7-aminomethyl-7-carbaguanosine(34) in tRNA + S-adenosyl-L-methionine = epoxyqueuosine(34) in tRNA + adenine + L-methionine + 2 H(+). It participates in tRNA modification; tRNA-queuosine biosynthesis. Functionally, transfers and isomerizes the ribose moiety from AdoMet to the 7-aminomethyl group of 7-deazaguanine (preQ1-tRNA) to give epoxyqueuosine (oQ-tRNA). The sequence is that of S-adenosylmethionine:tRNA ribosyltransferase-isomerase from Shewanella sp. (strain MR-4).